Reading from the N-terminus, the 554-residue chain is Urocanate hydratase (554 aa).

NAD(+) contacts are provided by residues glycine 50–glycine 51, glutamine 128, glycine 174–glycine 176, glutamate 194, arginine 199, asparagine 240–alanine 241, glutamine 261–histidine 265, tyrosine 271–isoleucine 272, and tyrosine 320. The active site involves cysteine 408. Glycine 490 serves as a coordination point for NAD(+).

The protein belongs to the urocanase family. The cofactor is NAD(+).

The protein resides in the cytoplasm. The enzyme catalyses 4-imidazolone-5-propanoate = trans-urocanate + H2O. Its pathway is amino-acid degradation; L-histidine degradation into L-glutamate; N-formimidoyl-L-glutamate from L-histidine: step 2/3. Catalyzes the conversion of urocanate to 4-imidazolone-5-propionate. This is Urocanate hydratase from Rubrobacter xylanophilus (strain DSM 9941 / JCM 11954 / NBRC 16129 / PRD-1).